Consider the following 177-residue polypeptide: Cell division inhibitor SulA (177 aa).

The tract at residues 112–118 (ALASGNY) is ftsZ binding. The tract at residues 170 to 177 (KIHSIHYH) is lon protease binding.

This sequence belongs to the SulA family. In terms of assembly, interacts with FtsZ. Is rapidly cleaved and degraded by the Lon protease once DNA damage is repaired.

Its function is as follows. Component of the SOS system and an inhibitor of cell division. Accumulation of SulA causes rapid cessation of cell division and the appearance of long, non-septate filaments. In the presence of GTP, binds a polymerization-competent form of FtsZ in a 1:1 ratio, thus inhibiting FtsZ polymerization and therefore preventing it from participating in the assembly of the Z ring. This mechanism prevents the premature segregation of damaged DNA to daughter cells during cell division. The sequence is that of Cell division inhibitor SulA from Photorhabdus laumondii subsp. laumondii (strain DSM 15139 / CIP 105565 / TT01) (Photorhabdus luminescens subsp. laumondii).